The following is a 466-amino-acid chain: tRNA modification GTPase MnmE (466 aa).

The (6S)-5-formyl-5,6,7,8-tetrahydrofolate site is built by R23, E86, and K125. The region spanning 221 to 388 is the TrmE-type G domain; sequence GIPVAIVGEP…LKNELLSFVN (168 aa). N231 serves as a coordination point for K(+). Residues 231 to 236, 250 to 256, and 275 to 278 contribute to the GTP site; these read NVGKST, SDIAGTT, and DTAG. Residue S235 participates in Mg(2+) binding. 3 residues coordinate K(+): S250, I252, and T255. T256 provides a ligand contact to Mg(2+). Position 466 (K466) interacts with (6S)-5-formyl-5,6,7,8-tetrahydrofolate.

The protein belongs to the TRAFAC class TrmE-Era-EngA-EngB-Septin-like GTPase superfamily. TrmE GTPase family. In terms of assembly, homodimer. Heterotetramer of two MnmE and two MnmG subunits. K(+) is required as a cofactor.

It is found in the cytoplasm. Functionally, exhibits a very high intrinsic GTPase hydrolysis rate. Involved in the addition of a carboxymethylaminomethyl (cmnm) group at the wobble position (U34) of certain tRNAs, forming tRNA-cmnm(5)s(2)U34. In Flavobacterium johnsoniae (strain ATCC 17061 / DSM 2064 / JCM 8514 / BCRC 14874 / CCUG 350202 / NBRC 14942 / NCIMB 11054 / UW101) (Cytophaga johnsonae), this protein is tRNA modification GTPase MnmE.